An 86-amino-acid polypeptide reads, in one-letter code: Large ribosomal subunit protein bL31 (86 aa).

Positions 66–86 are disordered; that stretch reads GMGSADSATSQETKEAKESDK. The segment covering 77 to 86 has biased composition (basic and acidic residues); sequence ETKEAKESDK.

It belongs to the bacterial ribosomal protein bL31 family. Type A subfamily. As to quaternary structure, part of the 50S ribosomal subunit.

Functionally, binds the 23S rRNA. The sequence is that of Large ribosomal subunit protein bL31 from Prochlorococcus marinus (strain MIT 9515).